Consider the following 299-residue polypeptide: ATP synthase gamma chain (299 aa).

It belongs to the ATPase gamma chain family. As to quaternary structure, F-type ATPases have 2 components, CF(1) - the catalytic core - and CF(0) - the membrane proton channel. CF(1) has five subunits: alpha(3), beta(3), gamma(1), delta(1), epsilon(1). CF(0) has three main subunits: a, b and c.

The protein localises to the cell membrane. Its function is as follows. Produces ATP from ADP in the presence of a proton gradient across the membrane. The gamma chain is believed to be important in regulating ATPase activity and the flow of protons through the CF(0) complex. The protein is ATP synthase gamma chain of Clavibacter sepedonicus (Clavibacter michiganensis subsp. sepedonicus).